We begin with the raw amino-acid sequence, 393 residues long: Formate-dependent phosphoribosylglycinamide formyltransferase (393 aa).

N(1)-(5-phospho-beta-D-ribosyl)glycinamide is bound by residues 22–23 (EL) and Glu-82. Residues Arg-114, Lys-155, 160–165 (SSGKGQ), 195–198 (EGFI), and Glu-203 each bind ATP. In terms of domain architecture, ATP-grasp spans 119–308 (RLAAEELKLP…QFALHARAIL (190 aa)). Residues Glu-267 and Glu-279 each contribute to the Mg(2+) site. N(1)-(5-phospho-beta-D-ribosyl)glycinamide is bound by residues Asp-286, Lys-356, and 363 to 364 (RR).

Belongs to the PurK/PurT family. In terms of assembly, homodimer.

The catalysed reaction is N(1)-(5-phospho-beta-D-ribosyl)glycinamide + formate + ATP = N(2)-formyl-N(1)-(5-phospho-beta-D-ribosyl)glycinamide + ADP + phosphate + H(+). Its pathway is purine metabolism; IMP biosynthesis via de novo pathway; N(2)-formyl-N(1)-(5-phospho-D-ribosyl)glycinamide from N(1)-(5-phospho-D-ribosyl)glycinamide (formate route): step 1/1. In terms of biological role, involved in the de novo purine biosynthesis. Catalyzes the transfer of formate to 5-phospho-ribosyl-glycinamide (GAR), producing 5-phospho-ribosyl-N-formylglycinamide (FGAR). Formate is provided by PurU via hydrolysis of 10-formyl-tetrahydrofolate. The protein is Formate-dependent phosphoribosylglycinamide formyltransferase of Pseudomonas syringae pv. tomato (strain ATCC BAA-871 / DC3000).